A 467-amino-acid chain; its full sequence is Cysteine--tRNA ligase (467 aa).

Cysteine 29 provides a ligand contact to Zn(2+). Positions 31–41 (PTVYDDSHLGH) match the 'HIGH' region motif. Residues 155–174 (KLSGRGEDLEQVSRIESSEE) form a disordered region. Basic and acidic residues predominate over residues 158-174 (GRGEDLEQVSRIESSEE). Zn(2+)-binding residues include cysteine 210, histidine 239, and glutamate 243. The 'KMSKS' region signature appears at 271 to 275 (KMSKS). Lysine 274 contacts ATP.

This sequence belongs to the class-I aminoacyl-tRNA synthetase family. As to quaternary structure, monomer. Zn(2+) is required as a cofactor.

It is found in the cytoplasm. It carries out the reaction tRNA(Cys) + L-cysteine + ATP = L-cysteinyl-tRNA(Cys) + AMP + diphosphate. The sequence is that of Cysteine--tRNA ligase from Wolinella succinogenes (strain ATCC 29543 / DSM 1740 / CCUG 13145 / JCM 31913 / LMG 7466 / NCTC 11488 / FDC 602W) (Vibrio succinogenes).